Consider the following 827-residue polypeptide: Ribosome biogenesis protein ERB1 (827 aa).

Positions Met1–Pro129 are disordered. Residues Asp7–Lys18 are compositionally biased toward basic and acidic residues. The span at Cys45–Val60 shows a compositional bias: acidic residues. Over residues Leu61–Ser77 the composition is skewed to low complexity. Acidic residues-rich tracts occupy residues Gly81 to Ala99 and Glu108 to Asp124. The required for interaction with NOP7 stretch occupies residues Arg291 to Ser409. The segment at Ser409–Pro445 is required for interaction with YTM1. 6 WD repeats span residues Gly461–Lys500, Asn509–Glu549, Lys657–Lys695, Pro698–Lys737, Tyr741–Lys780, and Val796–Thr827.

This sequence belongs to the WD repeat BOP1/ERB1 family. As to quaternary structure, component of the NOP7 complex, composed of ERB1, NOP7 and YTM1. The complex is held together by ERB1, which interacts with NOP7 via its N-terminal domain and with YTM1 via a high-affinity interaction between the seven-bladed beta-propeller domains of the 2 proteins. The NOP7 complex associates with the 66S pre-ribosome.

Its subcellular location is the nucleus. It localises to the nucleolus. The protein localises to the nucleoplasm. Component of the NOP7 complex, which is required for maturation of the 25S and 5.8S ribosomal RNAs and formation of the 60S ribosome. The protein is Ribosome biogenesis protein ERB1 of Eremothecium gossypii (strain ATCC 10895 / CBS 109.51 / FGSC 9923 / NRRL Y-1056) (Yeast).